We begin with the raw amino-acid sequence, 249 residues long: Beta-crystallin B1 (249 aa).

Residues 1–49 (MSQPAVKASATAAVNPGPDGKGKGAPPPGPAPGSGPAQAPAQPMPAAKG) are disordered. S2 carries the N-acetylserine modification. The interval 2–55 (SQPAVKASATAAVNPGPDGKGKGAPPPGPAPGSGPAQAPAQPMPAAKGDLPPGS) is N-terminal arm. Over residues 34–49 (SGPAQAPAQPMPAAKG) the composition is skewed to low complexity. 2 consecutive Beta/gamma crystallin 'Greek key' domains span residues 56–95 (YKLV…IVTS) and 96–140 (GPWV…RPIR). A connecting peptide region spans residues 141 to 145 (MDAQE). 2 Beta/gamma crystallin 'Greek key' domains span residues 146-187 (HKLC…RVSS) and 188-230 (GTWV…RRLR). Residues 232 to 249 (RQWHREGCFPVLAAEPPK) form a C-terminal arm region.

The protein belongs to the beta/gamma-crystallin family. As to quaternary structure, homo/heterodimer, or complexes of higher-order. The structure of beta-crystallin oligomers seems to be stabilized through interactions between the N-terminal arms. In terms of processing, specific cleavages in the N-terminal arm occur during lens maturation and give rise to truncated forms, leading to impaired oligomerization and protein insolubilization.

Its function is as follows. Crystallins are the dominant structural components of the vertebrate eye lens. The chain is Beta-crystallin B1 (CRYBB1) from Sus scrofa (Pig).